A 437-amino-acid polypeptide reads, in one-letter code: tRNA-2-methylthio-N(6)-dimethylallyladenosine synthase (437 aa).

Positions 1–115 constitute an MTTase N-terminal domain; that stretch reads MKVYIETMGC…ISQVIHKEKA (115 aa). C10, C46, C78, C148, C152, and C155 together coordinate [4Fe-4S] cluster. In terms of domain architecture, Radical SAM core spans 134 to 367; it reads KKAQIRSLLN…QNRHKEILEE (234 aa). The 67-residue stretch at 370–436 folds into the TRAM domain; the sequence is KLEVGKTHVV…KGRLIATAKG (67 aa).

Belongs to the methylthiotransferase family. MiaB subfamily. Monomer. Requires [4Fe-4S] cluster as cofactor.

It localises to the cytoplasm. It carries out the reaction N(6)-dimethylallyladenosine(37) in tRNA + (sulfur carrier)-SH + AH2 + 2 S-adenosyl-L-methionine = 2-methylsulfanyl-N(6)-dimethylallyladenosine(37) in tRNA + (sulfur carrier)-H + 5'-deoxyadenosine + L-methionine + A + S-adenosyl-L-homocysteine + 2 H(+). In terms of biological role, catalyzes the methylthiolation of N6-(dimethylallyl)adenosine (i(6)A), leading to the formation of 2-methylthio-N6-(dimethylallyl)adenosine (ms(2)i(6)A) at position 37 in tRNAs that read codons beginning with uridine. The polypeptide is tRNA-2-methylthio-N(6)-dimethylallyladenosine synthase (Helicobacter pylori (strain Shi470)).